The chain runs to 455 residues: Homogentisate 1,2-dioxygenase (455 aa).

The active-site Proton acceptor is the His-308. Residues His-351 and Glu-357 each contribute to the Fe cation site. Positions 366 and 387 each coordinate homogentisate. His-387 serves as a coordination point for Fe cation.

This sequence belongs to the homogentisate dioxygenase family. In terms of assembly, hexamer; dimer of trimers. It depends on Fe cation as a cofactor.

It carries out the reaction homogentisate + O2 = 4-maleylacetoacetate + H(+). The protein operates within amino-acid degradation; L-phenylalanine degradation; acetoacetate and fumarate from L-phenylalanine: step 4/6. Its function is as follows. Involved in the catabolism of homogentisate (2,5-dihydroxyphenylacetate or 2,5-OH-PhAc), a central intermediate in the degradation of phenylalanine and tyrosine. Catalyzes the oxidative ring cleavage of the aromatic ring of homogentisate to yield maleylacetoacetate. The polypeptide is Homogentisate 1,2-dioxygenase (Xanthomonas campestris pv. campestris (strain 8004)).